We begin with the raw amino-acid sequence, 624 residues long: Threonine--tRNA ligase (624 aa).

Residues 1 to 143 (MRLLFIHADE…SRTVTPEAAE (143 aa)) are editing domain. The interval 197 to 499 (AHVKLMREKE…EQEGKLPTLP (303 aa)) is catalytic. The Zn(2+) site is built by Cys-289, His-340, and His-467. Residues 598–624 (LERETEGKPRVPLTIPDRLSRRPRFGR) are disordered.

The protein belongs to the class-II aminoacyl-tRNA synthetase family. In terms of assembly, homodimer. Zn(2+) is required as a cofactor.

It localises to the cytoplasm. It catalyses the reaction tRNA(Thr) + L-threonine + ATP = L-threonyl-tRNA(Thr) + AMP + diphosphate + H(+). Functionally, catalyzes the attachment of threonine to tRNA(Thr) in a two-step reaction: L-threonine is first activated by ATP to form Thr-AMP and then transferred to the acceptor end of tRNA(Thr). Also edits incorrectly charged L-seryl-tRNA(Thr). The polypeptide is Threonine--tRNA ligase (Methanopyrus kandleri (strain AV19 / DSM 6324 / JCM 9639 / NBRC 100938)).